The following is a 472-amino-acid chain: uncharacterized protein (472 aa).

To B.subtilis YcdC.

This is an uncharacterized protein from Bacillus subtilis (strain 168).